Consider the following 548-residue polypeptide: Folylpolyglutamate synthase (548 aa).

ATP is bound at residue 130–133 (GKGS). Residues S157, E234, and H262 each contribute to the Mg(2+) site. Residues R382 and D396 each contribute to the ATP site.

The protein belongs to the folylpolyglutamate synthase family. The cofactor is a monovalent cation.

Its subcellular location is the mitochondrion inner membrane. The protein localises to the mitochondrion matrix. The protein resides in the cytoplasm. The catalysed reaction is (6S)-5,6,7,8-tetrahydrofolyl-(gamma-L-Glu)(n) + L-glutamate + ATP = (6S)-5,6,7,8-tetrahydrofolyl-(gamma-L-Glu)(n+1) + ADP + phosphate + H(+). It participates in cofactor biosynthesis; tetrahydrofolylpolyglutamate biosynthesis. Its function is as follows. Catalyzes conversion of folates to polyglutamate derivatives allowing concentration of folate compounds in the cell and the intracellular retention of these cofactors, which are important substrates for most of the folate-dependent enzymes that are involved in one-carbon transfer reactions involved in purine, pyrimidine and amino acid synthesis. Required for methionine synthesis and maintenance of intact mitochondrial DNA. Involved in telomere maintenance. The polypeptide is Folylpolyglutamate synthase (Saccharomyces cerevisiae (strain AWRI1631) (Baker's yeast)).